The following is a 445-amino-acid chain: Neuropeptide Y receptor type 5 (445 aa).

Over 1–42 (MDLELDEYYNKTLATENNTAATRNSDFPVWDDYKSSVDDLQY) the chain is Extracellular. 2 N-linked (GlcNAc...) asparagine glycosylation sites follow: asparagine 10 and asparagine 17. Residues 43–63 (FLIGLYTFVSLLGFMGNLLIL) form a helical membrane-spanning segment. Residues 64-77 (MALMKKRNQKTTVN) lie on the Cytoplasmic side of the membrane. A helical transmembrane segment spans residues 78–98 (FLIGNLAFSDILVVLFCSPFT). Topologically, residues 99-117 (LTSVLLDQWMFGKVMCHIM) are extracellular. A disulfide bond links cysteine 114 and cysteine 198. The chain crosses the membrane as a helical span at residues 118 to 138 (PFLQCVSVLVSTLILISIAIV). The Cytoplasmic portion of the chain corresponds to 139–156 (RYHMIKHPISNNLTANHG). Residues 157–177 (YFLIATVWTLGFAICSPLPVF) form a helical membrane-spanning segment. Over 178 to 208 (HSLVELQETFGSALLSSRYLCVESWPSDSYR) the chain is Extracellular. A helical transmembrane segment spans residues 209–229 (IAFTISLLLVQYILPLVCLTV). Residues 230–369 (SHTSVCRSIS…KKRSRSVFYR (140 aa)) lie on the Cytoplasmic side of the membrane. Residues 370–390 (LTILILVFAVSWMPLHLFHVV) traverse the membrane as a helical segment. At 391 to 407 (TDFNDNLISNRHFKLVY) the chain is on the extracellular side. The chain crosses the membrane as a helical span at residues 408–428 (CICHLLGMMSCCLNPILYGFL). Residues 429 to 445 (NNGIKADLVSLIHCLHM) are Cytoplasmic-facing. Residue cysteine 442 is the site of S-palmitoyl cysteine attachment.

The protein belongs to the G-protein coupled receptor 1 family. In terms of tissue distribution, brain; hypothalamus.

It localises to the cell membrane. In terms of biological role, receptor for neuropeptide Y and peptide YY. The activity of this receptor is mediated by G proteins that inhibit adenylate cyclase activity. Seems to be associated with food intake. Could be involved in feeding disorders. The protein is Neuropeptide Y receptor type 5 (NPY5R) of Homo sapiens (Human).